We begin with the raw amino-acid sequence, 347 residues long: S-adenosylmethionine:tRNA ribosyltransferase-isomerase (347 aa).

This sequence belongs to the QueA family. In terms of assembly, monomer.

Its subcellular location is the cytoplasm. The catalysed reaction is 7-aminomethyl-7-carbaguanosine(34) in tRNA + S-adenosyl-L-methionine = epoxyqueuosine(34) in tRNA + adenine + L-methionine + 2 H(+). It functions in the pathway tRNA modification; tRNA-queuosine biosynthesis. In terms of biological role, transfers and isomerizes the ribose moiety from AdoMet to the 7-aminomethyl group of 7-deazaguanine (preQ1-tRNA) to give epoxyqueuosine (oQ-tRNA). This chain is S-adenosylmethionine:tRNA ribosyltransferase-isomerase, found in Treponema denticola (strain ATCC 35405 / DSM 14222 / CIP 103919 / JCM 8153 / KCTC 15104).